We begin with the raw amino-acid sequence, 332 residues long: Probable allantoicase (332 aa).

It belongs to the allantoicase family.

The catalysed reaction is allantoate + H2O = (S)-ureidoglycolate + urea. Its pathway is nitrogen metabolism; (S)-allantoin degradation; (S)-ureidoglycolate from allantoate (aminidohydrolase route): step 1/1. This chain is Probable allantoicase, found in Pseudomonas aeruginosa (strain UCBPP-PA14).